The following is a 164-amino-acid chain: C-phycoerythrin alpha chain (164 aa).

(2R,3E)-phycoerythrobilin contacts are provided by Cys-82 and Cys-139.

The protein belongs to the phycobiliprotein family. In terms of assembly, heterodimer of an alpha and a beta chain. Post-translationally, contains two covalently linked bilin chromophores.

It localises to the cellular thylakoid membrane. Its function is as follows. Light-harvesting photosynthetic bile pigment-protein from the phycobiliprotein complex. This chain is C-phycoerythrin alpha chain (cpeA), found in Microchaete diplosiphon (Fremyella diplosiphon).